The primary structure comprises 317 residues: MIEVKHLKTLQALRNCGSLAAAAATLHQTQSALSHQFSDLEQRLGFRLFVRKSQPLRFTPQGEILLQLANQVLPQISQALQACNEPQQTRLRIAIECHSCIQWLTPALENFHKNWPQVEMDFKSGVTFDPQPALQQGELDLVMTSDILPRSGLHYSPMFDYEVRLVLAPDHPLAAKTRITPEDLASETLLIYPVQRSRLDVWRHFLQPAGVSPSLKSVDNTLLLIQMVAARMGIAALPHWVVESFERQGLVVTKTLGEGLWSRLYAAVRDGEQRQPVTEAFIRSARNHACDHLPFVKSAERPTYDAPTVRPGSPARL.

The region spanning 1–59 is the HTH lysR-type domain; sequence MIEVKHLKTLQALRNCGSLAAAAATLHQTQSALSHQFSDLEQRLGFRLFVRKSQPLRFT. The H-T-H motif DNA-binding region spans 19–38; the sequence is LAAAAATLHQTQSALSHQFS.

It belongs to the LysR transcriptional regulatory family.

It localises to the cytoplasm. Control of the last step in methionine biosynthesis; MetR is a positive activator of the metA, metE and metH genes. It is also a negative regulator of its own expression. This chain is HTH-type transcriptional regulator MetR (metR), found in Escherichia coli O157:H7.